A 329-amino-acid polypeptide reads, in one-letter code: DNA-directed RNA polymerase subunit alpha (329 aa).

The segment at 1-234 is alpha N-terminal domain (alpha-NTD); sequence MSGSVTEFLK…EQLDAFVELR (234 aa). The interval 248–329 is alpha C-terminal domain (alpha-CTD); sequence FDPILLRPVD…WPPESIAEKD (82 aa).

This sequence belongs to the RNA polymerase alpha chain family. As to quaternary structure, homodimer. The RNAP catalytic core consists of 2 alpha, 1 beta, 1 beta' and 1 omega subunit. When a sigma factor is associated with the core the holoenzyme is formed, which can initiate transcription.

The enzyme catalyses RNA(n) + a ribonucleoside 5'-triphosphate = RNA(n+1) + diphosphate. Its function is as follows. DNA-dependent RNA polymerase catalyzes the transcription of DNA into RNA using the four ribonucleoside triphosphates as substrates. The protein is DNA-directed RNA polymerase subunit alpha of Pseudoalteromonas atlantica (strain T6c / ATCC BAA-1087).